Consider the following 168-residue polypeptide: Sperm acrosome-associated protein 9 (168 aa).

Microtubule inner protein component of sperm flagellar doublet microtubules. Interacts with CABP1 and CALR. Interacts with INCA1. Interacts with microtubules. As to expression, testis-specific. Expressed in round spermatids.

It localises to the cytoplasm. It is found in the cytoplasmic vesicle. The protein localises to the secretory vesicle. Its subcellular location is the acrosome. The protein resides in the cytoskeleton. It localises to the cilium basal body. It is found in the flagellum axoneme. The protein localises to the cilium axoneme. Its subcellular location is the nucleus. In terms of biological role, microtubule inner protein (MIP) part of the dynein-decorated doublet microtubules (DMTs) of multiciliated respiratory cells and the distal singlet microtubules of monoflagellated spermatozoa. Forms an extensive interaction network cross-linking the lumen of axonemal doublet microtubules. The polypeptide is Sperm acrosome-associated protein 9 (Spaca9) (Rattus norvegicus (Rat)).